Here is a 397-residue protein sequence, read N- to C-terminus: Acetate kinase (397 aa).

Asn8 is a binding site for Mg(2+). Lys15 contributes to the ATP binding site. Position 89 (Arg89) interacts with substrate. Asp146 functions as the Proton donor/acceptor in the catalytic mechanism. ATP is bound by residues His206 to Gly210, Asp281 to Arg283, and Gly329 to Asn333. A Mg(2+)-binding site is contributed by Glu382.

The protein belongs to the acetokinase family. As to quaternary structure, homodimer. Requires Mg(2+) as cofactor. The cofactor is Mn(2+).

The protein resides in the cytoplasm. It carries out the reaction acetate + ATP = acetyl phosphate + ADP. It functions in the pathway metabolic intermediate biosynthesis; acetyl-CoA biosynthesis; acetyl-CoA from acetate: step 1/2. Its function is as follows. Catalyzes the formation of acetyl phosphate from acetate and ATP. Can also catalyze the reverse reaction. This chain is Acetate kinase, found in Bacillus cereus (strain ATCC 10987 / NRS 248).